The following is a 224-amino-acid chain: Perchlorate reductase assembly chaperone protein (224 aa).

It belongs to the type II DMSO reductase enzyme chaperone family.

It localises to the cytoplasm. May function as a system-specific molybdenum chaperone protein essential for the assembly of the perchlorate reductase PcrAB complex prior to its periplasmic translocation via the Tat pathway. The chain is Perchlorate reductase assembly chaperone protein (pcrD) from Dechloromonas aromatica (strain RCB).